Here is a 155-residue protein sequence, read N- to C-terminus: Ribosomal RNA large subunit methyltransferase H (155 aa).

S-adenosyl-L-methionine is bound by residues Ile-71, Gly-103, and 122–127 (FGRMVW).

It belongs to the RNA methyltransferase RlmH family. In terms of assembly, homodimer.

It localises to the cytoplasm. It catalyses the reaction pseudouridine(1915) in 23S rRNA + S-adenosyl-L-methionine = N(3)-methylpseudouridine(1915) in 23S rRNA + S-adenosyl-L-homocysteine + H(+). Specifically methylates the pseudouridine at position 1915 (m3Psi1915) in 23S rRNA. In Cereibacter sphaeroides (strain ATCC 17025 / ATH 2.4.3) (Rhodobacter sphaeroides), this protein is Ribosomal RNA large subunit methyltransferase H.